The primary structure comprises 90 residues: Small ribosomal subunit protein bS20 (90 aa).

This sequence belongs to the bacterial ribosomal protein bS20 family.

Binds directly to 16S ribosomal RNA. The polypeptide is Small ribosomal subunit protein bS20 (Francisella tularensis subsp. holarctica (strain FTNF002-00 / FTA)).